A 196-amino-acid chain; its full sequence is ATP-dependent Clp protease proteolytic subunit (196 aa).

Serine 98 acts as the Nucleophile in catalysis. Histidine 123 is an active-site residue.

Belongs to the peptidase S14 family. Fourteen ClpP subunits assemble into 2 heptameric rings which stack back to back to give a disk-like structure with a central cavity, resembling the structure of eukaryotic proteasomes.

It localises to the cytoplasm. The catalysed reaction is Hydrolysis of proteins to small peptides in the presence of ATP and magnesium. alpha-casein is the usual test substrate. In the absence of ATP, only oligopeptides shorter than five residues are hydrolyzed (such as succinyl-Leu-Tyr-|-NHMec, and Leu-Tyr-Leu-|-Tyr-Trp, in which cleavage of the -Tyr-|-Leu- and -Tyr-|-Trp bonds also occurs).. Its function is as follows. Cleaves peptides in various proteins in a process that requires ATP hydrolysis. Has a chymotrypsin-like activity. Plays a major role in the degradation of misfolded proteins. The protein is ATP-dependent Clp protease proteolytic subunit of Actinobacillus pleuropneumoniae serotype 7 (strain AP76).